The primary structure comprises 242 residues: Cell division protein FtsQ (242 aa).

Residues methionine 1–threonine 12 lie on the Cytoplasmic side of the membrane. A helical membrane pass occupies residues arginine 13–tyrosine 32. Topologically, residues asparagine 33–glutamate 242 are periplasmic. The POTRA domain occupies leucine 37 to arginine 106.

The protein belongs to the FtsQ/DivIB family. FtsQ subfamily. In terms of assembly, part of a complex composed of FtsB, FtsL and FtsQ.

The protein localises to the cell inner membrane. Its function is as follows. Essential cell division protein. May link together the upstream cell division proteins, which are predominantly cytoplasmic, with the downstream cell division proteins, which are predominantly periplasmic. May control correct divisome assembly. This is Cell division protein FtsQ from Neisseria gonorrhoeae (strain ATCC 700825 / FA 1090).